A 463-amino-acid polypeptide reads, in one-letter code: tRNA-2-methylthio-N(6)-dimethylallyladenosine synthase (463 aa).

An MTTase N-terminal domain is found at 18–136 (RKLYIETYGC…LPNLVGAAEQ (119 aa)). [4Fe-4S] cluster-binding residues include Cys-27, Cys-63, Cys-100, Cys-174, Cys-178, and Cys-181. Residues 160 to 392 (GGVHINGFVS…IALQNRLSEE (233 aa)) form the Radical SAM core domain. Positions 395–458 (KRDIGKTFEV…SATLFGEVVE (64 aa)) constitute a TRAM domain.

Belongs to the methylthiotransferase family. MiaB subfamily. Monomer. [4Fe-4S] cluster is required as a cofactor.

The protein resides in the cytoplasm. It catalyses the reaction N(6)-dimethylallyladenosine(37) in tRNA + (sulfur carrier)-SH + AH2 + 2 S-adenosyl-L-methionine = 2-methylsulfanyl-N(6)-dimethylallyladenosine(37) in tRNA + (sulfur carrier)-H + 5'-deoxyadenosine + L-methionine + A + S-adenosyl-L-homocysteine + 2 H(+). In terms of biological role, catalyzes the methylthiolation of N6-(dimethylallyl)adenosine (i(6)A), leading to the formation of 2-methylthio-N6-(dimethylallyl)adenosine (ms(2)i(6)A) at position 37 in tRNAs that read codons beginning with uridine. The polypeptide is tRNA-2-methylthio-N(6)-dimethylallyladenosine synthase (Porphyromonas gingivalis (strain ATCC BAA-308 / W83)).